Here is a 219-residue protein sequence, read N- to C-terminus: Large ribosomal subunit protein uL16 (219 aa).

This sequence belongs to the universal ribosomal protein uL16 family. In terms of assembly, component of the small ribosomal subunit. Mature ribosomes consist of a small (40S) and a large (60S) subunit. The 40S subunit contains about 33 different proteins and 1 molecule of RNA (18S). The 60S subunit contains about 49 different proteins and 3 molecules of RNA (25S, 5.8S and 5S).

The sequence is that of Large ribosomal subunit protein uL16 (RPL10) from Solanum melongena (Eggplant).